We begin with the raw amino-acid sequence, 425 residues long: Zinc finger protein 789 (425 aa).

The region spanning 11–82 (LSFEDVAMYF…DLPRTGNRKA (72 aa)) is the KRAB domain. 8 C2H2-type zinc fingers span residues 201–223 (YECS…QRIH), 229–251 (FECK…KQCH), 257–279 (YRCH…KRIH), 285–307 (YKCS…QVIH), 313–335 (HKCL…QQIH), 341–363 (HKCS…QRIH), 369–391 (FQCG…QVIH), and 397–419 (YQCV…QGTH).

The protein belongs to the krueppel C2H2-type zinc-finger protein family.

The protein localises to the nucleus. In terms of biological role, may be involved in transcriptional regulation. This chain is Zinc finger protein 789 (ZNF789), found in Homo sapiens (Human).